Consider the following 522-residue polypeptide: ATP synthase subunit alpha (522 aa).

176–183 (GDRQTGKT) is a binding site for ATP.

This sequence belongs to the ATPase alpha/beta chains family. As to quaternary structure, F-type ATPases have 2 components, CF(1) - the catalytic core - and CF(0) - the membrane proton channel. CF(1) has five subunits: alpha(3), beta(3), gamma(1), delta(1), epsilon(1). CF(0) has four main subunits: a(1), b(1), b'(1) and c(9-12).

It is found in the cell membrane. It catalyses the reaction ATP + H2O + 4 H(+)(in) = ADP + phosphate + 5 H(+)(out). Functionally, produces ATP from ADP in the presence of a proton gradient across the membrane. The alpha chain is a regulatory subunit. This chain is ATP synthase subunit alpha, found in Chloroflexus aurantiacus (strain ATCC 29366 / DSM 635 / J-10-fl).